The primary structure comprises 366 residues: Histone-lysine N-methyltransferase SETD7 (366 aa).

MORN repeat units follow at residues 36 to 58 (FEGN…DGST), 59 to 81 (LEGY…DGGV), and 106 to 128 (FKGQ…DGGS). Residues 214 to 336 (ERVYVAESLI…ADEELTVAYG (123 aa)) form the SET domain. Residues 226–228 (AGE), Asn296, His297, and Glu356 each bind S-adenosyl-L-methionine.

Belongs to the class V-like SAM-binding methyltransferase superfamily. Histone-lysine methyltransferase family. SET7 subfamily. Interacts with IPF1/PDX-1. Widely expressed. Expressed in pancreatic islets.

It is found in the nucleus. The protein resides in the chromosome. It carries out the reaction L-lysyl(4)-[histone H3] + S-adenosyl-L-methionine = N(6)-methyl-L-lysyl(4)-[histone H3] + S-adenosyl-L-homocysteine + H(+). The catalysed reaction is L-lysyl-[protein] + S-adenosyl-L-methionine = N(6)-methyl-L-lysyl-[protein] + S-adenosyl-L-homocysteine + H(+). Histone methyltransferase that specifically monomethylates 'Lys-4' of histone H3. H3 'Lys-4' methylation represents a specific tag for epigenetic transcriptional activation. Plays a central role in the transcriptional activation of genes such as collagenase or insulin. Recruited by IPF1/PDX-1 to the insulin promoter, leading to activate transcription. Also has methyltransferase activity toward non-histone proteins such as CGAS, p53/TP53, TAF10, and possibly TAF7 by recognizing and binding the [KR]-[STA]-K in substrate proteins. Monomethylates 'Lys-189' of TAF10, leading to increase the affinity of TAF10 for RNA polymerase II. Monomethylates 'Lys-372' of p53/TP53, stabilizing p53/TP53 and increasing p53/TP53-mediated transcriptional activation. Monomethylates 'Lys-491' of CGAS, promoting interaction between SGF29 and CGAS. In Homo sapiens (Human), this protein is Histone-lysine N-methyltransferase SETD7 (SETD7).